Consider the following 1514-residue polypeptide: Neurexin-1 (1514 aa).

The signal sequence occupies residues Met-1 to Gly-30. In terms of domain architecture, Laminin G-like 1 spans Leu-31–Cys-217. The Extracellular portion of the chain corresponds to Leu-31–Thr-1438. 2 N-linked (GlcNAc...) asparagine glycosylation sites follow: Asn-125 and Asn-190. The tract at residues Val-197–Glu-221 is disordered. The region spanning Ala-219 to Ser-256 is the EGF-like 1 domain. Disulfide bonds link Cys-228/Cys-243 and Cys-245/Cys-255. Laminin G-like domains follow at residues Ile-283 to Cys-480 and Asp-487 to Cys-679. Asp-329, Leu-346, and Met-414 together coordinate Ca(2+). 5 disulfide bridges follow: Cys-444–Cys-480, Cys-650–Cys-679, Cys-687–Cys-698, Cys-692–Cys-707, and Cys-709–Cys-719. One can recognise an EGF-like 2 domain in the interval Thr-683–Glu-720. 2 Laminin G-like domains span residues Val-725–Cys-898 and Asp-912–Cys-1087. Ca(2+)-binding residues include Asp-772 and Leu-789. Asn-797 is a glycosylation site (N-linked (GlcNAc...) asparagine). Arg-848 is a binding site for Ca(2+). Intrachain disulfides connect Cys-890/Cys-898, Cys-1059/Cys-1087, Cys-1094/Cys-1105, Cys-1099/Cys-1114, and Cys-1116/Cys-1126. An EGF-like 3 domain is found at Pro-1090 to Asn-1127. The Laminin G-like 6 domain occupies Tyr-1133–Val-1331. Ca(2+) contacts are provided by Asp-1183 and Val-1200. Asn-1230 carries N-linked (GlcNAc...) asparagine glycosylation. Ca(2+) is bound by residues Ile-1282 and Asn-1284. O-linked (Xyl...) (heparan sulfate) serine glycosylation occurs at Ser-1392. A disordered region spans residues Pro-1396 to Ser-1427. A helical membrane pass occupies residues Gly-1439–Met-1459. Residues Tyr-1460–Val-1514 are Cytoplasmic-facing. Positions Asn-1481 to Asn-1507 are interaction with CASK. A disordered region spans residues Asn-1481–Val-1514.

This sequence belongs to the neurexin family. In terms of assembly, interacts (via laminin G-like domain 2 and/or laminin G-like domain 6) with NLGN1 forming a heterotetramer, where one NLGN1 dimer interacts with one NRXN1 dimer. Also interacts (via laminin G-like domain 2 and/or laminin G-like domain 6) with NLGN2, NLGN3 and NLGN4L; interactions with NLGN1, NLGN2, NLGN3 and NLGN4L are calcium-dependent. Interacts (via cytoplasmic C-terminal region) with CASK (via the PDZ, SH3 and guanylate kinase-like domains). Interacts (via cytoplasmic C-terminus) with CASKIN1 and APBA1. Interacts (via laminin G-like domain 2) with NXPH1 and NXPH3. Alpha-type isoforms (neurexin-1-alpha) interact (via laminin G-like domain 2 and/or laminin G-like domain 6) with DAG1 (via alpha-dystroglycan chain). Interacts with LRRTM1, LRRTM2, LRRTM3 and LRRTM4. Interacts with SYT13 and SYTL1. Interacts with CBLN1, CBLN2 and, less avidly, with CBLN4. Interacts with CLSTN3. Post-translationally, O-glycosylated; contains heparan sulfate. Heparan sulfate attachment is required for synapse development by mediating interactions with neuroligins and LRRTM2.

The protein localises to the presynaptic cell membrane. Its function is as follows. Cell surface protein involved in cell-cell-interactions, exocytosis of secretory granules and regulation of signal transmission. Function is isoform-specific. Alpha-type isoforms have a long N-terminus with six laminin G-like domains and play an important role in synaptic signal transmission. Alpha-type isoforms play a role in the regulation of calcium channel activity and Ca(2+)-triggered neurotransmitter release at synapses and at neuromuscular junctions. They play an important role in Ca(2+)-triggered exocytosis of secretory granules in pituitary gland. They may affect their functions at synapses and in endocrine cells via their interactions with proteins from the exocytotic machinery. Likewise, alpha-type isoforms play a role in regulating the activity of postsynaptic NMDA receptors, a subtype of glutamate-gated ion channels. Both alpha-type and beta-type isoforms may play a role in the formation or maintenance of synaptic junctions via their interactions (via the extracellular domains) with neuroligin family members, CBLN1 or CBLN2. In vitro, triggers the de novo formation of presynaptic structures. May be involved in specification of excitatory synapses. Alpha-type isoforms were first identified as receptors for alpha-latrotoxin from spider venom. The chain is Neurexin-1 (Nrxn1) from Mus musculus (Mouse).